We begin with the raw amino-acid sequence, 926 residues long: Mating-type protein A-alpha Y3 (926 aa).

A DNA-binding region (homeobox) is located at residues 147 to 206 (YKKPRPKFHSEYTPLLELYFHFNAYPTFADRRMLAEKTGMQTRQITVWFQNHRRRAKGPL). Disordered regions lie at residues 238 to 281 (SHLR…KVGK), 308 to 374 (QQAP…TSSA), 424 to 452 (GKGK…SRLN), and 625 to 734 (RARK…MNES). Composition is skewed to basic and acidic residues over residues 267–281 (KKPD…KVGK) and 326–338 (NAQD…ATKS). Over residues 428–441 (PSQNLTSTPATFST) the composition is skewed to polar residues. The span at 632–660 (KQAEKEARKEEKRARKEAKQAKKDRKEQR) shows a compositional bias: basic and acidic residues. 2 stretches are compositionally biased toward low complexity: residues 669–687 (STLD…SATS) and 699–724 (SSAS…SGTS).

The protein localises to the nucleus. Its function is as follows. Specifies A-alpha-3 mating-type. May regulate the expression of genes specific to the homokaryotic cell type. This chain is Mating-type protein A-alpha Y3, found in Schizophyllum commune (Split gill fungus).